The sequence spans 1086 residues: Isoleucine--tRNA ligase (1086 aa).

Residues 53 to 63 (PFANGLPHYGH) carry the 'HIGH' region motif. The short motif at 624 to 628 (KLSKR) is the 'KMSKS' region element. Residue Lys-627 coordinates ATP.

Belongs to the class-I aminoacyl-tRNA synthetase family. IleS type 2 subfamily. As to quaternary structure, monomer. Zn(2+) serves as cofactor.

It localises to the cytoplasm. The enzyme catalyses tRNA(Ile) + L-isoleucine + ATP = L-isoleucyl-tRNA(Ile) + AMP + diphosphate. In terms of biological role, catalyzes the attachment of isoleucine to tRNA(Ile). As IleRS can inadvertently accommodate and process structurally similar amino acids such as valine, to avoid such errors it has two additional distinct tRNA(Ile)-dependent editing activities. One activity is designated as 'pretransfer' editing and involves the hydrolysis of activated Val-AMP. The other activity is designated 'posttransfer' editing and involves deacylation of mischarged Val-tRNA(Ile). This chain is Isoleucine--tRNA ligase, found in Rickettsia typhi (strain ATCC VR-144 / Wilmington).